Reading from the N-terminus, the 389-residue chain is Succinate--CoA ligase [ADP-forming] subunit beta (389 aa).

Residues lysine 46, 53–55 (GRG), glutamate 99, cysteine 102, and glutamate 107 contribute to the ATP site. Residues asparagine 199 and aspartate 213 each coordinate Mg(2+). Substrate-binding positions include asparagine 264 and 321–323 (GIV).

It belongs to the succinate/malate CoA ligase beta subunit family. Heterotetramer of two alpha and two beta subunits. It depends on Mg(2+) as a cofactor.

The enzyme catalyses succinate + ATP + CoA = succinyl-CoA + ADP + phosphate. It carries out the reaction GTP + succinate + CoA = succinyl-CoA + GDP + phosphate. The protein operates within carbohydrate metabolism; tricarboxylic acid cycle; succinate from succinyl-CoA (ligase route): step 1/1. Succinyl-CoA synthetase functions in the citric acid cycle (TCA), coupling the hydrolysis of succinyl-CoA to the synthesis of either ATP or GTP and thus represents the only step of substrate-level phosphorylation in the TCA. The beta subunit provides nucleotide specificity of the enzyme and binds the substrate succinate, while the binding sites for coenzyme A and phosphate are found in the alpha subunit. This chain is Succinate--CoA ligase [ADP-forming] subunit beta, found in Haemophilus influenzae (strain 86-028NP).